The following is a 502-amino-acid chain: Probable cytosol aminopeptidase (502 aa).

Lys-269 and Asp-274 together coordinate Mn(2+). Lys-281 is an active-site residue. Mn(2+) is bound by residues Asp-292, Asp-351, and Glu-353. Residue Arg-355 is part of the active site.

It belongs to the peptidase M17 family. Mn(2+) is required as a cofactor.

The protein resides in the cytoplasm. The enzyme catalyses Release of an N-terminal amino acid, Xaa-|-Yaa-, in which Xaa is preferably Leu, but may be other amino acids including Pro although not Arg or Lys, and Yaa may be Pro. Amino acid amides and methyl esters are also readily hydrolyzed, but rates on arylamides are exceedingly low.. It carries out the reaction Release of an N-terminal amino acid, preferentially leucine, but not glutamic or aspartic acids.. Its function is as follows. Presumably involved in the processing and regular turnover of intracellular proteins. Catalyzes the removal of unsubstituted N-terminal amino acids from various peptides. This is Probable cytosol aminopeptidase from Vibrio parahaemolyticus serotype O3:K6 (strain RIMD 2210633).